Reading from the N-terminus, the 176-residue chain is Protein MAL2 (176 aa).

Topologically, residues 1-34 (MSAGGAPVPPPPNPAMSFPAPRVTLPAGPDILRT) are cytoplasmic. Positions 31–175 (ILRTYSGAFV…SLGLALRRWR (145 aa)) constitute an MARVEL domain. A helical transmembrane segment spans residues 35–55 (YSGAFVCLEIVFGGLVWILVA). At 56–66 (SSNVPLPLLQG) the chain is on the lumenal side. A helical transmembrane segment spans residues 67–87 (WVMFVSVTAFVCSLLFLGVFL). Residues 88 to 102 (SGVVTQINANWNFLD) are Cytoplasmic-facing. Residues 103-123 (FAYHFTVFVFYFGAFLLEAAT) form a helical membrane-spanning segment. The Lumenal portion of the chain corresponds to 124-149 (TSLHDLRCNRTMTVQPLLSDNQYNIN). An N-linked (GlcNAc...) asparagine glycan is attached at Asn132. A helical membrane pass occupies residues 150-170 (VAATIFAFVTTACYGCSLGLA). Residues 171-176 (LRRWRP) are Cytoplasmic-facing.

This sequence belongs to the MAL family. As to quaternary structure, interacts with TPD52L2.

The protein resides in the cell membrane. It localises to the apical cell membrane. Functionally, member of the machinery of polarized transport. Required for the indirect transcytotic route at the step of the egress of the transcytosing cargo from perinuclear endosomes in order for it to travel to the apical surface via a raft-dependent pathway. The sequence is that of Protein MAL2 (MAL2) from Bos taurus (Bovine).